The sequence spans 332 residues: Glycerol-3-phosphate dehydrogenase [NAD(P)+] (332 aa).

Residues Ser11, Trp12, Arg32, Arg33, and Lys106 each coordinate NADPH. Sn-glycerol 3-phosphate is bound by residues Lys106 and Gly136. Ala140 contributes to the NADPH binding site. Positions 191, 244, 254, 255, and 256 each coordinate sn-glycerol 3-phosphate. Lys191 functions as the Proton acceptor in the catalytic mechanism. Position 255 (Arg255) interacts with NADPH. NADPH contacts are provided by Val280 and Glu282.

Belongs to the NAD-dependent glycerol-3-phosphate dehydrogenase family.

It is found in the cytoplasm. It carries out the reaction sn-glycerol 3-phosphate + NAD(+) = dihydroxyacetone phosphate + NADH + H(+). The enzyme catalyses sn-glycerol 3-phosphate + NADP(+) = dihydroxyacetone phosphate + NADPH + H(+). The protein operates within membrane lipid metabolism; glycerophospholipid metabolism. Its function is as follows. Catalyzes the reduction of the glycolytic intermediate dihydroxyacetone phosphate (DHAP) to sn-glycerol 3-phosphate (G3P), the key precursor for phospholipid synthesis. The protein is Glycerol-3-phosphate dehydrogenase [NAD(P)+] of Corynebacterium kroppenstedtii (strain DSM 44385 / JCM 11950 / CIP 105744 / CCUG 35717).